A 234-amino-acid chain; its full sequence is Phosphoribosylaminoimidazole-succinocarboxamide synthase (234 aa).

The protein belongs to the SAICAR synthetase family.

The enzyme catalyses 5-amino-1-(5-phospho-D-ribosyl)imidazole-4-carboxylate + L-aspartate + ATP = (2S)-2-[5-amino-1-(5-phospho-beta-D-ribosyl)imidazole-4-carboxamido]succinate + ADP + phosphate + 2 H(+). The protein operates within purine metabolism; IMP biosynthesis via de novo pathway; 5-amino-1-(5-phospho-D-ribosyl)imidazole-4-carboxamide from 5-amino-1-(5-phospho-D-ribosyl)imidazole-4-carboxylate: step 1/2. This Streptococcus pyogenes serotype M3 (strain ATCC BAA-595 / MGAS315) protein is Phosphoribosylaminoimidazole-succinocarboxamide synthase.